Reading from the N-terminus, the 96-residue chain is YcgL domain-containing protein Csal_1462 (96 aa).

The region spanning 4–88 is the YcgL domain; the sequence is RLCEIFKSPR…ARESYLLDLY (85 aa).

This is YcgL domain-containing protein Csal_1462 from Chromohalobacter salexigens (strain ATCC BAA-138 / DSM 3043 / CIP 106854 / NCIMB 13768 / 1H11).